The chain runs to 650 residues: Acetyl-coenzyme A synthetase (650 aa).

Residues 191–194 (RGGR), T311, and N335 each bind CoA. ATP contacts are provided by residues 387–389 (GEP), 411–416 (DTWWQT), D500, and R515. S523 serves as a coordination point for CoA. R526 serves as a coordination point for ATP. Mg(2+) is bound by residues V537, H539, and V542. Residue R584 coordinates CoA. Residue K609 is modified to N6-acetyllysine.

It belongs to the ATP-dependent AMP-binding enzyme family. It depends on Mg(2+) as a cofactor. In terms of processing, acetylated. Deacetylation by the SIR2-homolog deacetylase activates the enzyme.

It carries out the reaction acetate + ATP + CoA = acetyl-CoA + AMP + diphosphate. Its function is as follows. Catalyzes the conversion of acetate into acetyl-CoA (AcCoA), an essential intermediate at the junction of anabolic and catabolic pathways. AcsA undergoes a two-step reaction. In the first half reaction, AcsA combines acetate with ATP to form acetyl-adenylate (AcAMP) intermediate. In the second half reaction, it can then transfer the acetyl group from AcAMP to the sulfhydryl group of CoA, forming the product AcCoA. The sequence is that of Acetyl-coenzyme A synthetase from Shewanella sp. (strain MR-7).